The primary structure comprises 510 residues: Pyruvate kinase, cytosolic isozyme (510 aa).

Arg50 contributes to the substrate binding site. K(+) contacts are provided by Asn52, Ser54, Asp84, and Thr85. Residue 52-55 (NFSH) participates in ATP binding. 2 residues coordinate ATP: Arg91 and Lys176. Glu242 is a binding site for Mg(2+). Residues Gly265, Asp266, and Thr298 each contribute to the substrate site. Asp266 contacts Mg(2+).

This sequence belongs to the pyruvate kinase family. In terms of assembly, homotetramer. The cofactor is Mg(2+). It depends on K(+) as a cofactor.

It is found in the cytoplasm. The enzyme catalyses pyruvate + ATP = phosphoenolpyruvate + ADP + H(+). It functions in the pathway carbohydrate degradation; glycolysis; pyruvate from D-glyceraldehyde 3-phosphate: step 5/5. This Solanum tuberosum (Potato) protein is Pyruvate kinase, cytosolic isozyme.